The sequence spans 434 residues: uncharacterized protein (434 aa).

A signal peptide spans 1–17; sequence MTFLLFQLLVLLRYSIG. 12 helical membrane passes run 48–68, 70–90, 112–132, 141–161, 173–193, 206–226, 232–252, 271–291, 305–325, 344–364, 380–400, and 404–424; these read AAIS…FTVL, EWVY…SVTA, YRVA…FTIF, TYGT…NAVV, WITG…RLVT, YGVH…TSFV, YCGL…LSGL, EGVY…HLGY, TSSI…TILF, WVLA…YIPL, ATFL…DTIF, and FSSL…IGTI.

The protein localises to the membrane. This is an uncharacterized protein from Arabidopsis thaliana (Mouse-ear cress).